We begin with the raw amino-acid sequence, 444 residues long: Tol-Pal system protein TolB (444 aa).

The first 26 residues, 1-26, serve as a signal peptide directing secretion; sequence MTLFRTLAPMGLALALLLPAAVPAAA. The span at 281-310 shows a compositional bias: polar residues; sequence IYTLDTGSGTRRQLTNSPSIETAPSYSPDG. The tract at residues 281–311 is disordered; it reads IYTLDTGSGTRRQLTNSPSIETAPSYSPDGS.

It belongs to the TolB family. In terms of assembly, the Tol-Pal system is composed of five core proteins: the inner membrane proteins TolA, TolQ and TolR, the periplasmic protein TolB and the outer membrane protein Pal. They form a network linking the inner and outer membranes and the peptidoglycan layer.

The protein resides in the periplasm. Functionally, part of the Tol-Pal system, which plays a role in outer membrane invagination during cell division and is important for maintaining outer membrane integrity. This chain is Tol-Pal system protein TolB, found in Cereibacter sphaeroides (strain ATCC 17029 / ATH 2.4.9) (Rhodobacter sphaeroides).